Reading from the N-terminus, the 297-residue chain is Tyrosine recombinase XerC (297 aa).

A Core-binding (CB) domain is found at 1–83 (MAILDEFDEH…AVKAFTAWAK (83 aa)). A Tyr recombinase domain is found at 104–291 (TLPAVLRQDQ…AVSRLRVVHD (188 aa)). Active-site residues include Arg148, Lys172, His243, Arg246, and His269. The O-(3'-phospho-DNA)-tyrosine intermediate role is filled by Tyr278.

It belongs to the 'phage' integrase family. XerC subfamily. In terms of assembly, forms a cyclic heterotetrameric complex composed of two molecules of XerC and two molecules of XerD.

The protein localises to the cytoplasm. Site-specific tyrosine recombinase, which acts by catalyzing the cutting and rejoining of the recombining DNA molecules. The XerC-XerD complex is essential to convert dimers of the bacterial chromosome into monomers to permit their segregation at cell division. It also contributes to the segregational stability of plasmids. The chain is Tyrosine recombinase XerC from Mycobacterium leprae (strain TN).